Here is a 200-residue protein sequence, read N- to C-terminus: 3-isopropylmalate dehydratase small subunit (200 aa).

This sequence belongs to the LeuD family. LeuD type 1 subfamily. In terms of assembly, heterodimer of LeuC and LeuD.

It carries out the reaction (2R,3S)-3-isopropylmalate = (2S)-2-isopropylmalate. It participates in amino-acid biosynthesis; L-leucine biosynthesis; L-leucine from 3-methyl-2-oxobutanoate: step 2/4. Catalyzes the isomerization between 2-isopropylmalate and 3-isopropylmalate, via the formation of 2-isopropylmaleate. This Methylobacterium radiotolerans (strain ATCC 27329 / DSM 1819 / JCM 2831 / NBRC 15690 / NCIMB 10815 / 0-1) protein is 3-isopropylmalate dehydratase small subunit.